Reading from the N-terminus, the 699-residue chain is Elongation factor G (699 aa).

A tr-type G domain is found at 8 to 288 (EDYRNFGIMA…AVVDYLPSPL (281 aa)). Residues 17–24 (AHIDAGKT), 86–90 (DTPGH), and 140–143 (NKMD) each bind GTP.

This sequence belongs to the TRAFAC class translation factor GTPase superfamily. Classic translation factor GTPase family. EF-G/EF-2 subfamily.

The protein localises to the cytoplasm. Catalyzes the GTP-dependent ribosomal translocation step during translation elongation. During this step, the ribosome changes from the pre-translocational (PRE) to the post-translocational (POST) state as the newly formed A-site-bound peptidyl-tRNA and P-site-bound deacylated tRNA move to the P and E sites, respectively. Catalyzes the coordinated movement of the two tRNA molecules, the mRNA and conformational changes in the ribosome. This is Elongation factor G from Rhizobium rhizogenes (strain K84 / ATCC BAA-868) (Agrobacterium radiobacter).